The sequence spans 206 residues: Probable N-acetyltransferase 14 (206 aa).

In terms of domain architecture, N-acetyltransferase spans 55–206 (LRFVLASFAL…TLVREFSKDL (152 aa)). A helical membrane pass occupies residues 57–77 (FVLASFALALLLPVFLAVTAV).

It belongs to the camello family.

It localises to the membrane. In terms of biological role, probable acetyltransferase. May act as a transcription factor regulating the expression of coproporphyrinogen oxidase by binding to a promoter regulatory element. In Macaca fascicularis (Crab-eating macaque), this protein is Probable N-acetyltransferase 14 (NAT14).